The sequence spans 388 residues: Sulfate adenylyltransferase (388 aa).

It belongs to the sulfate adenylyltransferase family.

It catalyses the reaction sulfate + ATP + H(+) = adenosine 5'-phosphosulfate + diphosphate. It participates in sulfur metabolism; hydrogen sulfide biosynthesis; sulfite from sulfate: step 1/3. The sequence is that of Sulfate adenylyltransferase from Trichodesmium erythraeum (strain IMS101).